A 132-amino-acid chain; its full sequence is Large ribosomal subunit protein uL14 (132 aa).

The protein belongs to the universal ribosomal protein uL14 family. Part of the 50S ribosomal subunit. Forms a cluster with proteins L3 and L24e, part of which may contact the 16S rRNA in 2 intersubunit bridges.

Binds to 23S rRNA. Forms part of two intersubunit bridges in the 70S ribosome. The chain is Large ribosomal subunit protein uL14 from Halorubrum lacusprofundi (strain ATCC 49239 / DSM 5036 / JCM 8891 / ACAM 34).